We begin with the raw amino-acid sequence, 153 residues long: Small ribosomal subunit protein uS5 (153 aa).

In terms of domain architecture, S5 DRBM spans F15–V78.

It belongs to the universal ribosomal protein uS5 family. Part of the 30S ribosomal subunit. Contacts proteins S4 and S8.

In terms of biological role, with S4 and S12 plays an important role in translational accuracy. Its function is as follows. Located at the back of the 30S subunit body where it stabilizes the conformation of the head with respect to the body. The chain is Small ribosomal subunit protein uS5 from Helicobacter acinonychis (strain Sheeba).